We begin with the raw amino-acid sequence, 1744 residues long: Probable disease resistance protein At4g19520 (1744 aa).

A TIR 1 domain is found at 3–163 (DGKEVYISFN…KIVADVRQKL (161 aa)). The active site involves Glu80. Residues 192–411 (SLGIWGMAGI…VSEKEIFLDI (220 aa)) form the NB-ARC domain. 20 LRR repeats span residues 503 to 526 (YEDV…AFQH), 557 to 581 (PPEL…GFQY), 583 to 602 (VELN…TKNL), 603 to 626 (EVLK…QYSP), 648 to 669 (LQHL…PKVP), 670 to 692 (PSIR…NHSS), 710 to 733 (DHRK…IVIF), 734 to 754 (ESLE…QGFP), 755 to 777 (QNLK…LCHH), 779 to 802 (SKLV…MSNM), 804 to 823 (YLAV…KELP), 824 to 846 (RNLK…LLET), 848 to 871 (SEVV…MSKL), 892 to 915 (PLNL…IGDL), 917 to 939 (LLDT…MHNL), 941 to 963 (PLKV…LPKV), 987 to 1010 (YEHR…IRWM), 1011 to 1035 (PSLK…DFSK), 1037 to 1059 (LSLR…SLQL), and 1062 to 1086 (AHGC…TFSN). One can recognise a TIR 2 domain in the interval 1399-1559 (RNNDVFVSFH…KVANDIRKKL (161 aa)).

Belongs to the disease resistance TIR-NB-LRR family.

The catalysed reaction is NAD(+) + H2O = ADP-D-ribose + nicotinamide + H(+). In terms of biological role, probable disease resistance protein. This Arabidopsis thaliana (Mouse-ear cress) protein is Probable disease resistance protein At4g19520.